The sequence spans 137 residues: AVCVSLLGAANIPPQHLNLYQFKEMIRYTIPCEKTWGEYADYGCYCGAGGSGTPIDALDRCCYVHDNCYGDAAKIRGCDPKTQSYSYKLTQRTIICYGAAGTCARVVCDCDRTAALCFGNSEYIEGHKNIDTKRHCQ.

The first 9 residues, 1 to 9 (AVCVSLLGA), serve as a signal peptide directing secretion. Positions 10–17 (ANIPPQHL) are excised as a propeptide. Intrachain disulfides connect C44–C136, C46–C62, C61–C117, C68–C110, C78–C103, and C96–C108. Ca(2+) contacts are provided by Y45, G47, and G49. The active site involves H65. D66 lines the Ca(2+) pocket. The active site involves D111.

This sequence belongs to the phospholipase A2 family. Group I subfamily. D49 sub-subfamily. Heterodimer; disulfide-linked. The A chains have phospholipase A2 activity and the B chains show homology with the basic protease inhibitors. Requires Ca(2+) as cofactor. In terms of tissue distribution, expressed by the venom gland.

It localises to the secreted. It carries out the reaction a 1,2-diacyl-sn-glycero-3-phosphocholine + H2O = a 1-acyl-sn-glycero-3-phosphocholine + a fatty acid + H(+). In terms of biological role, snake venom phospholipase A2 (PLA2) that inhibits neuromuscular transmission by blocking acetylcholine release from the nerve termini. PLA2 catalyzes the calcium-dependent hydrolysis of the 2-acyl groups in 3-sn-phosphoglycerides. The chain is Acidic phospholipase A2 beta-bungarotoxin A6 chain from Bungarus multicinctus (Many-banded krait).